We begin with the raw amino-acid sequence, 430 residues long: tRNA(Ile)-lysidine synthase (430 aa).

21 to 26 contacts ATP; sequence SGGLDS.

The protein belongs to the tRNA(Ile)-lysidine synthase family.

The protein localises to the cytoplasm. The catalysed reaction is cytidine(34) in tRNA(Ile2) + L-lysine + ATP = lysidine(34) in tRNA(Ile2) + AMP + diphosphate + H(+). In terms of biological role, ligates lysine onto the cytidine present at position 34 of the AUA codon-specific tRNA(Ile) that contains the anticodon CAU, in an ATP-dependent manner. Cytidine is converted to lysidine, thus changing the amino acid specificity of the tRNA from methionine to isoleucine. The polypeptide is tRNA(Ile)-lysidine synthase (Salmonella newport (strain SL254)).